Here is a 426-residue protein sequence, read N- to C-terminus: Histone-binding protein RBBP7 (426 aa).

WD repeat units follow at residues glutamine 47 to histidine 123, arginine 129 to arginine 174, glycine 182 to aspartate 218, valine 229 to aspartate 270, valine 276 to phenylalanine 313, glutamate 319 to histidine 370, and isoleucine 377 to methionine 404.

Belongs to the WD repeat RBAP46/RBAP48/MSI1 family. As to quaternary structure, binds directly to helix 1 of the histone fold of histone H4, a region that is not accessible when H4 is in chromatin.

Its subcellular location is the nucleus. Functionally, core histone-binding subunit that may target chromatin remodeling factors, histone acetyltransferases and histone deacetylases to their histone substrates in a manner that is regulated by nucleosomal DNA. Component of several complexes which regulate chromatin metabolism. The polypeptide is Histone-binding protein RBBP7 (rbbp7) (Danio rerio (Zebrafish)).